Reading from the N-terminus, the 342-residue chain is C-X-C chemokine receptor type 6 (342 aa).

Over 1–32 (MAEHDYHEDYGFSSFNDSSQEEHQDFLQFSKV) the chain is Extracellular. N-linked (GlcNAc...) asparagine glycosylation occurs at Asn16. The helical transmembrane segment at 33-59 (FLPCMYLVVFVCGLVGNSLVLVISIFY) threads the bilayer. Over 60–68 (HKLQSLTDV) the chain is Cytoplasmic. Residues 69 to 89 (FLVNLPLADLVFVCTLPFWAY) traverse the membrane as a helical segment. Residues 90–103 (AGIHEWVFGQVMCK) lie on the Extracellular side of the membrane. The cysteines at positions 102 and 180 are disulfide-linked. The helical transmembrane segment at 104–125 (SLLGIYTINFYTSMLILTCITV) threads the bilayer. Topologically, residues 126-143 (DRFIVVVKATKAYNQQAK) are cytoplasmic. A helical transmembrane segment spans residues 144 to 164 (RMTWGKVTSLLIWVISLLVSL). Residues 165 to 187 (PQIIYGNVFNLDKLICGYHDEAI) are Extracellular-facing. The chain crosses the membrane as a helical span at residues 188 to 215 (STVVLATQMTLGFFLPLLTMIVCYSVII). The Cytoplasmic portion of the chain corresponds to 216 to 231 (KTLLHAGGFQKHRSLK). A helical membrane pass occupies residues 232–259 (IIFLVMAVFLLTQMPFNLMKFIRSTHWE). Residues 260-275 (YYAMTSFHYTIMVTEA) are Extracellular-facing. A helical transmembrane segment spans residues 276 to 293 (IAYLRACLNPVLYAFVSL). The Cytoplasmic portion of the chain corresponds to 294-342 (KFRKNFWKLVKDIGCLPYLGVSHQWKSSEDNSKTFSASHNVEATSMFQL).

Belongs to the G-protein coupled receptor 1 family. Expressed in lymphoid tissues and activated T cells.

It localises to the cell membrane. In terms of biological role, receptor for the C-X-C chemokine CXCL16. Used as a coreceptor by SIVs and by strains of HIV-2 and m-tropic HIV-1. The polypeptide is C-X-C chemokine receptor type 6 (CXCR6) (Homo sapiens (Human)).